Here is a 132-residue protein sequence, read N- to C-terminus: Small ribosomal subunit protein uS8 (132 aa).

Belongs to the universal ribosomal protein uS8 family. In terms of assembly, part of the 30S ribosomal subunit. Contacts proteins S5 and S12.

Functionally, one of the primary rRNA binding proteins, it binds directly to 16S rRNA central domain where it helps coordinate assembly of the platform of the 30S subunit. In Levilactobacillus brevis (strain ATCC 367 / BCRC 12310 / CIP 105137 / JCM 1170 / LMG 11437 / NCIMB 947 / NCTC 947) (Lactobacillus brevis), this protein is Small ribosomal subunit protein uS8.